Consider the following 2269-residue polypeptide: MAASADILLPEVHLNSPIVKHKLVYFLLLGKLPHNLSEDEITPLHNQNWDQIAHEESNLSERLFAVRSELTRRIAQLRATRWRSEIAVLLWPNSLPYLCTFKPYNRLNTIDEWNKLVSAASNILSSPLSKCMQDISTKLIGRTNLFSRSQSRPGQSADNTITLNKIAAVWADNKWQPLVSLWLTIKYQMRQMIANQSKRTCSELVYVVDTRSGIIIITPELVTCFDKDHSVLMYFTFEMVLMISDLFEGRMNVTALCTVSNYLSPLLSRIERLFDIVDHLAHLLGDNVYKIIASLESLVYGCLQLHDPVIDLAGTFYSFVAQEIVDGLQQGNILSPEEAYTVTEQLLECFSGLSPDLTAELLCLMRLWGHPNLTAAQAAKKVRDTMCAGKVLDFQIIMKTLAFFHTILINGYRRKKNGIWPPLSLPGNASKSLIELHHDNSEISYEYTLRHWKELSLIEFKKCFDFDPGEELSIFMKDKAISAPKEDWMSVFRKSLIKQRHQRHHIPMPNPFNRRLLLNFIEDPSFDPAKELEYVTSGEYLRDPHFCASYSLKEKEIKPDGRIFAKLTNRMRSCQVIAEALLANHAGKLMKENGVVMNQISLTKSLLTMSQIGLISEKAQRYTRDNIALGALFSKGQRTRAHPQTQLSSIDSSQNRELPDDSLELSACFITTDLTKYCPQWRYQTIIPFAKTLNRMYGVPHLFEWIHLRLLRSTLYVGDPFNPPADTSVFDLDQVLNGDIFIVSPKGGIEGLCQKMWTMISISVIILSSAESKTRVMSMVQGDNQAIAVTTKVPRSVPLTEKRNLAYNASKLFFDRLKHNNFGLGHQLKAQETIISSQFFIYSKRVFYQGRILTQALKNASKLCLTADVLGECTQASCSNAATTIMRLTENGVEKDVCYMLNVYQAIRQLCFDLYYPQYSIPGEQISQHYLKHPSIVARLVILPSQLGGLNYLSCSRLFNRNIGDPLGTAVADLKRLIKCGALESWVLSNLLSRKPGTGSWATLAADPYSLNIDYLYPPTTILKRHTQNTLMEVCKNPMLKGVFTDNAREEENNLAKFLLDRDIVLPRVAHIVIEQSSVGRKKQIQGFFDTTRTIMRKSFEIKPLSSKRTLSVIECNINYLAYNFNIIHHPNPIPGYLQCITTDNCSVDIARSLRKLSWSSLLNGRTLEGLETPDPIEVVNGALVIGVGECDYCMQGDTKFTWFFLPKGIEIDGDPEKNPPIRVPYVGSKTEERRVASMAYVKGATSSLKAALRGAGVFIWAYGDTDANWDDALDLANTRVQISKEQLQALTPLPTSANITHRLDDGATTIKFTPASSYAFSSYTHISNDQQYLEVDNRVVDSNIIYQQLMITGLGIIETYNNPPIRTSSEELTLHLHTSSSCCIRPVDGCIICESPSLLPQLTVPYTNPFVYDPNPLADYEIAHLDYLSYQARIGSIEHYSLQDRIDLLAHLTAKQMINSIIGLDESVSLLNDAVVTSDYTNNWISECSYTKIDLVFKMMAWNLLLELSFQMYYLRITTWSNIFDYTYMTLRRIPGNALTNIAATISHPKLLRRAMNLDVITPVHAPYLASLDYIKLSIDAIQWGIKQVLADLHNGIDYEILILSEDSLELSDRAMNLIARKLTLLALIQGNQLVLPKIKGLSPDEKCLVLTEHLMSEYQLLLLDDAELSKRSYNLTNPRITAFPSNNFYLTRKVLNSIRDSEEGQYLIGAYYDSFQQMETDIILHSTLIAPYDTSETLTKFDLCISLFPHDDNLEKYPLPVDHDSQSAVSTIVPGPPIHHVLRPLGVSSTSWYKGLSYVRYLELCKVPTGDHLYLAEGSGASMSLVEMLIPGQKVYYNSLFSSGENPPQRNYAPLPTQFVQSVPYKLWQADLTNKEGIIEDFIPLWNGNGAVTDLSNKDCVAFIIHKVGAEQASLVHVDLESTANLNQQSLSRSQIHALIIATTVLKRGGFLVYKTSWLPFSRLSQLACVLWSFFDKITMIRSSYSDPNSHEIYLVCRLAADFKTIGFSAALASAIAIAIHGDGFTTIHPDVVSNYWQHHLENVGRVGKAIDDVIDGVSTNFYSGDNGLILRCGGTPSSRKWLDIDLLPTFSSLQETLVNLVTVHLKEIIEIQTSSMEDYTSLLFTPYNIGSVGKIRTIVKLILERSLMYVIRNWLVMPSSYQDSVRQDLELGSFRLSSVLQEDTFWKLTENRKYLASQLTRDYITTFFTTHSILPIHRSYQKRIWKALGSVIYCSEVPGESQQNWDSIPLVYEEDQIERGIDGEEL.

In terms of domain architecture, RdRp catalytic spans 666–850 (SACFITTDLT…IYSKRVFYQG (185 aa)). Residues 1785 to 1998 (RPLGVSSTSW…DPNSHEIYLV (214 aa)) form the Mononegavirus-type SAM-dependent 2'-O-MTase domain. 1815–1824 (LYLAEGSGAS) contacts ATP.

It belongs to the paramyxovirus L protein family. Interacts with the P protein.

The protein resides in the virion. The protein localises to the host cytoplasm. The catalysed reaction is RNA(n) + a ribonucleoside 5'-triphosphate = RNA(n+1) + diphosphate. It catalyses the reaction a 5'-end (5'-triphosphoguanosine)-adenylyl-adenylyl-cytidylyl-adenosine in mRNA + 2 S-adenosyl-L-methionine = a 5'-end (N(7)-methyl 5'-triphosphoguanosine)-(2'-O-methyladenylyl)-adenylyl-cytidylyl-adenosine in mRNA + 2 S-adenosyl-L-homocysteine + H(+). The enzyme catalyses a 5'-end (5'-triphosphoguanosine)-adenylyl-adenylyl-cytidylyl-adenosine in mRNA + S-adenosyl-L-methionine = a 5'-end (5'-triphosphoguanosine)-(2'-O-methyladenylyl)-adenylyl-cytidylyl-adenosine in mRNA + S-adenosyl-L-homocysteine + H(+). It carries out the reaction a 5'-end triphospho-adenylyl-adenylyl-cytidylyl-adenosine in mRNA + GDP + H(+) = a 5'-end (5'-triphosphoguanosine)-adenylyl-adenylyl-cytidylyl-adenosine in mRNA + diphosphate. The catalysed reaction is a 5'-end (5'-triphosphoguanosine)-(2'-O-methyladenylyl)-adenylyl-cytidylyl-adenosine in mRNA + S-adenosyl-L-methionine = a 5'-end (N(7)-methyl 5'-triphosphoguanosine)-(2'-O-methyladenylyl)-adenylyl-cytidylyl-adenosine in mRNA + S-adenosyl-L-homocysteine. It catalyses the reaction GTP + H2O = GDP + phosphate + H(+). Functionally, RNA-directed RNA polymerase that catalyzes the transcription of viral mRNAs, their capping and polyadenylation. The template is composed of the viral RNA tightly encapsidated by the nucleoprotein (N). The viral polymerase binds to the genomic RNA at the 3' leader promoter, and transcribes subsequently all viral mRNAs with a decreasing efficiency. The first gene is the most transcribed, and the last the least transcribed. The viral phosphoprotein acts as a processivity factor. Capping is concomitant with initiation of mRNA transcription. Indeed, a GDP polyribonucleotidyl transferase (PRNTase) adds the cap structure when the nascent RNA chain length has reached few nucleotides. Ribose 2'-O methylation of viral mRNA cap precedes and facilitates subsequent guanine-N-7 methylation, both activities being carried by the viral polymerase. Polyadenylation of mRNAs occur by a stuttering mechanism at a slipery stop site present at the end viral genes. After finishing transcription of a mRNA, the polymerase can resume transcription of the downstream gene. RNA-directed RNA polymerase that catalyzes the replication of viral genomic RNA. The template is composed of the viral RNA tightly encapsidated by the nucleoprotein (N). The replicase mode is dependent on intracellular N protein concentration. In this mode, the polymerase replicates the whole viral genome without recognizing transcriptional signals, and the replicated genome is not caped or polyadenylated. The sequence is that of RNA-directed RNA polymerase L (L) from Simian virus 41 (SV41).